A 418-amino-acid polypeptide reads, in one-letter code: MSVDEKPIKIKVEKVSKIFGKQTKKAVQMLANGKTKKEILKATGSTVGVNQADFEVYDGEIFVIMGLSGSGKSTLVRMLNRLIEPTAGNIYIDGDMITNMSKDQLREVRRKKISMVFQKFALFPHRTILENTEYGLELQGVDKQERQQKALESLKLVGLEGFEHQYPDQLSGGMQQRVGLARALTNDPDILLMDEAFSALDPLIRKDMQDELLDLHDNVGKTIIFITHDLDEALRIGDRIVLMKDGNIVQIGTPEEILMNPSNEYVEKFVEDVDLSKVLTAGHIMKRAETVRIDKGPRVALTLMKNLGISSIYAVDKQKKLLGVIYASDAKKAAESDLSLQDILNTEFTTVPENTYLTEIFDVVSDANIPIAVVDEKQRMKGIVVRGALIGALAGNNEYINAEGTNEQTQDPSAQEVK.

The region spanning 34–270 is the ABC transporter domain; sequence KTKKEILKAT…PSNEYVEKFV (237 aa). Residue 66 to 73 participates in ATP binding; sequence GLSGSGKS. 2 CBS domains span residues 284–340 and 344–403; these read IMKR…DLSL and LNTE…INAE.

The protein belongs to the ABC transporter superfamily. The complex is composed of two ATP-binding proteins (OpuAA), two transmembrane proteins (OpuAB) and a solute-binding protein (OpuAC).

It carries out the reaction a quaternary ammonium(out) + ATP + H2O = a quaternary ammonium(in) + ADP + phosphate + H(+). In terms of biological role, involved in a multicomponent binding-protein-dependent transport system for glycine betaine. Probably responsible for energy coupling to the transport system. This Bacillus subtilis (strain 168) protein is Glycine betaine transport ATP-binding protein OpuAA (opuAA).